Consider the following 126-residue polypeptide: Acyl carrier protein 2, mitochondrial (126 aa).

The N-terminal 36 residues, 1 to 36 (MAARGAMLRYLRVNVNPTIQNPRECVLPFSILLRRF), are a transit peptide targeting the mitochondrion. In terms of domain architecture, Carrier spans 48-123 (SEVTDRVLSV…LAVDFIASHP (76 aa)). Ser83 bears the O-(pantetheine 4'-phosphoryl)serine mark.

Belongs to the acyl carrier protein (ACP) family. In terms of assembly, complex I is composed of at least 49 different subunits. In terms of processing, 4'-phosphopantetheine is transferred from CoA to a specific serine of the apo-ACP-like protein.

The protein resides in the mitochondrion. The protein operates within lipid metabolism; fatty acid biosynthesis. In terms of biological role, carrier of the growing fatty acid chain in fatty acid biosynthesis. May be involved in the synthesis of short and medium chain fatty acids. Accessory and non-catalytic subunit of the mitochondrial membrane respiratory chain NADH dehydrogenase (Complex I), which functions in the transfer of electrons from NADH to the respiratory chain. This Arabidopsis thaliana (Mouse-ear cress) protein is Acyl carrier protein 2, mitochondrial (MTACP2).